Here is a 168-residue protein sequence, read N- to C-terminus: Bifunctional protein PyrR (168 aa).

The PRPP-binding motif lies at 90-102 (LVLIDDVLMSGRT).

The protein belongs to the purine/pyrimidine phosphoribosyltransferase family. PyrR subfamily.

It carries out the reaction UMP + diphosphate = 5-phospho-alpha-D-ribose 1-diphosphate + uracil. In terms of biological role, regulates the transcription of the pyrimidine nucleotide (pyr) operon in response to exogenous pyrimidines. Its function is as follows. Also displays a weak uracil phosphoribosyltransferase activity which is not physiologically significant. This chain is Bifunctional protein PyrR, found in Pseudomonas fluorescens (strain ATCC BAA-477 / NRRL B-23932 / Pf-5).